The primary structure comprises 483 residues: MORN repeat-containing protein 1 (483 aa).

The residue at position 18 (Ser-18) is a Phosphoserine. 7 MORN repeats span residues 39 to 61 (YEGEWKGGKKHGHGKLLFKDGSY), 62 to 84 (YEGEFVNGEITGEGYQHWAWSGN), 86 to 108 (YSGQFVLGEPQGHGIMKYKAGGH), 109 to 131 (YEGELSQGLREGQGFLEDQDGQV), 132 to 154 (YQGSFHDNKRHGRGQMVFKNGDK), 155 to 177 (YEGDWVRDQRQGHGVLFCADGST), and 178 to 200 (YKGQWHNDVFSGLGSLVHCSGVT). Residues 392–427 (EKAGNRPKGDRSPPEVLSTAQEPLRGTNRSDGTTAE) form a disordered region. Over residues 394-404 (AGNRPKGDRSP) the composition is skewed to basic and acidic residues. Position 403 is a phosphoserine (Ser-403). A compositionally biased stretch (polar residues) spans 418 to 427 (TNRSDGTTAE).

The protein is MORN repeat-containing protein 1 (Morn1) of Rattus norvegicus (Rat).